A 985-amino-acid polypeptide reads, in one-letter code: MEEKRRDSAGTLAFAGSSGDSPASEPMPAPRRRGGGLKRKANALGGSNFFSSAPSKRMLTREKAMLASFSPVHNGPLTRARQAPSIMPSAADGVKSEVLNVAVGADGEKPKEEEERNKAIREWEALEAKIEADFEAIRSRDSNVHVVPNHCGWFSWEKIHPLEERSLPSFFNGKLEGRTSEVYREIRNWIMGKFHSNPNIQIELKDLTELEVGDSEAKQEVMEFLDYWGLINFHPFPPTDTGSTASDHDDLGDKESLLNSLYRFQVDEACPPLVHKPRFTAQATPSGLFPDPMAADELLKQEGPAVEYHCNSCSADCSRKRYHCPKQADFDLCTECFNSGKFSSDMSSSDFILMEPAEAPGVGSGKWTDQETLLLLEALEIFKENWNEIAEHVATKTKAQCMLHFLQMPIEDAFLDQIDYKDPISKDTTDLAVSKDDNSVLKDAPEEAENKKRVDEDETMKEVPEPEDGNEEKVSQESSKPGDASEETNEMEAEQKTPKLETAIEERCKDEADENIALKALTEAFEDVGHSSTPEASFSFADLGNPVMGLAAFLVRLAGSDVATASARASIKSLHSNSGMLLATRHCYILEDPPDNKKDPTKSKSCSADAEGNDDNSHKDDQPEEKSKKAEEVSLNSDDREMPDTDTGKETQDSVSEEKQPGSRTENSTTKLDAVQEKRSSKPVTTDNSEKPVDIICPSQDKCSGKELQEPLKDGNKLSSENKDASQSTVSQSAADASQPEASRDVEMKDTLQSEKDPEDVVKTVGEKVQLAKEEGANDVLSTPDKSVSQQPIGSASAPENGTAGGNPNIEGKKEKDICEGTKDKYNIEKLKRAAISAISAAAVKAKNLAKQEEDQIRQLSGSLIEKQLHKLEAKLSIFNEAESLTMRVREQLERSRQRLYHERAQIIAARLGVPPSMSSKASLPTNRIAANFANVAQRPPMGMAFPRPPMPRPPGFPVPGSFVAATTMTGSSDPSPGSDNVSSV.

A disordered region spans residues 1–55 (MEEKRRDSAGTLAFAGSSGDSPASEPMPAPRRRGGGLKRKANALGGSNFFSSAPS). The span at 30 to 41 (PRRRGGGLKRKA) shows a compositional bias: basic residues. A coiled-coil region spans residues 108–133 (EKPKEEEERNKAIREWEALEAKIEAD). The SWIRM domain maps to 145-242 (HVVPNHCGWF…FHPFPPTDTG (98 aa)). The segment at 305–359 (AVEYHCNSCSADCSRKRYHCPKQADFDLCTECFNSGKFSSDMSSSDFILMEPAEA) adopts a ZZ-type; degenerate zinc-finger fold. C310, C313, C333, and C336 together coordinate Zn(2+). Positions 362-413 (VGSGKWTDQETLLLLEALEIFKENWNEIAEHVATKTKAQCMLHFLQMPIEDA) constitute an SANT domain. Composition is skewed to basic and acidic residues over residues 428 to 464 (TTDL…KEVP), 493 to 502 (AEQKTPKLET), and 615 to 661 (DNSH…EKQP). Disordered stretches follow at residues 428 to 502 (TTDL…KLET) and 591 to 814 (EDPP…EGKK). A compositionally biased stretch (polar residues) spans 662–671 (GSRTENSTTK). Residues 703 to 724 (CSGKELQEPLKDGNKLSSENKD) show a composition bias toward basic and acidic residues. Polar residues predominate over residues 725 to 736 (ASQSTVSQSAAD). Residues 742-776 (ASRDVEMKDTLQSEKDPEDVVKTVGEKVQLAKEEG) are compositionally biased toward basic and acidic residues. The segment covering 780–800 (VLSTPDKSVSQQPIGSASAPE) has biased composition (polar residues). Residues 839 to 900 (ISAAAVKAKN…EQLERSRQRL (62 aa)) adopt a coiled-coil conformation. The interval 944 to 985 (MAFPRPPMPRPPGFPVPGSFVAATTMTGSSDPSPGSDNVSSV) is disordered. Over residues 947–958 (PRPPMPRPPGFP) the composition is skewed to pro residues. Residues 965 to 985 (AATTMTGSSDPSPGSDNVSSV) are compositionally biased toward polar residues.

In terms of assembly, interacts with SWI3B, but not with BSH. Component of a RNA-directed DNA methylation (RdDM) complex that contains at least MORC6, MORC1/CRT1, MORC2, SWI3D and SUVH9. Interacts with MORC6 and SUVH9. As to expression, ubiquitously expressed.

Its subcellular location is the nucleus. In terms of biological role, component of a multiprotein complex equivalent of the SWI/SNF complex, an ATP-dependent chromatin-remodeling complex, which is required for the positive and negative regulation of gene expression of a large number of genes. It changes chromatin structure by altering DNA-histone contacts within a nucleosome, leading eventually to a change in nucleosome position, thus facilitating or repressing binding of gene-specific transcription factors. This is SWI/SNF complex subunit SWI3D (SWI3D) from Arabidopsis thaliana (Mouse-ear cress).